Reading from the N-terminus, the 134-residue chain is Interleukin-5 (134 aa).

Positions 1-21 are cleaved as a signal peptide; sequence MRMHLHLTLVALGAAYVCANA. N-linked (GlcNAc...) asparagine glycans are attached at residues N76 and N90.

It belongs to the IL-5 family. Homodimer; disulfide-linked. Interacts with IL5RA. Interacts with CSF2RB.

The protein localises to the secreted. Its function is as follows. Homodimeric cytokine expressed predominantly by T-lymphocytes and NK cells that plays an important role in the survival, differentiation, and chemotaxis of eosinophils. Also acts on activated and resting B-cells to induce immunoglobulin production, growth, and differentiation. Mechanistically, exerts its biological effects through a receptor composed of IL5RA subunit and the cytokine receptor common subunit beta/CSF2RB. Binding to the receptor leads to activation of various kinases including LYN, SYK and JAK2 and thereby propagates signals through the RAS-MAPK and JAK-STAT5 pathways respectively. This chain is Interleukin-5 (IL5), found in Bos taurus (Bovine).